The sequence spans 581 residues: Arginine--tRNA ligase (581 aa).

Positions 122–132 (PNVAKPMHVGH) match the 'HIGH' region motif.

It belongs to the class-I aminoacyl-tRNA synthetase family. In terms of assembly, monomer.

It is found in the cytoplasm. The catalysed reaction is tRNA(Arg) + L-arginine + ATP = L-arginyl-tRNA(Arg) + AMP + diphosphate. The protein is Arginine--tRNA ligase of Francisella tularensis subsp. holarctica (strain FTNF002-00 / FTA).